The chain runs to 252 residues: MSDWNPSLYLHFAAERSRPAVELLARVPLENIEYIADLGCGPGNSTALLHQRWPAARITGIDSSPAMIAEARSALPDCLFVEADIRNWQPEQALDLIFANASLQWLPDHYELFPHLVSLLSPLGVLAVQMPDNWLEPTHVLMREVAWEQNYPDRGREPLAGVHAYYDILSEAGCEVDIWRTTYYHQMPSHQAIIDWVTATGLRPWLQDLTESEQQHFLTRYHQMLEEQYPLQENGQILLAFPRLFIVARRTE.

This sequence belongs to the methyltransferase superfamily. Tam family.

The protein localises to the cytoplasm. The catalysed reaction is trans-aconitate + S-adenosyl-L-methionine = (E)-3-(methoxycarbonyl)pent-2-enedioate + S-adenosyl-L-homocysteine. In terms of biological role, catalyzes the S-adenosylmethionine monomethyl esterification of trans-aconitate. The polypeptide is Trans-aconitate 2-methyltransferase (Escherichia coli O6:H1 (strain CFT073 / ATCC 700928 / UPEC)).